Reading from the N-terminus, the 293-residue chain is Formamidopyrimidine-DNA glycosylase (293 aa).

Proline 2 (schiff-base intermediate with DNA) is an active-site residue. Glutamate 3 (proton donor) is an active-site residue. Catalysis depends on lysine 60, which acts as the Proton donor; for beta-elimination activity. DNA contacts are provided by histidine 110, arginine 129, and arginine 174. The segment at 259-293 (NVYRRTGKECRKCGNLIERKKISGRSTHWCPKCQK) adopts an FPG-type zinc-finger fold. The active-site Proton donor; for delta-elimination activity is arginine 283.

This sequence belongs to the FPG family. Monomer. It depends on Zn(2+) as a cofactor.

The enzyme catalyses Hydrolysis of DNA containing ring-opened 7-methylguanine residues, releasing 2,6-diamino-4-hydroxy-5-(N-methyl)formamidopyrimidine.. The catalysed reaction is 2'-deoxyribonucleotide-(2'-deoxyribose 5'-phosphate)-2'-deoxyribonucleotide-DNA = a 3'-end 2'-deoxyribonucleotide-(2,3-dehydro-2,3-deoxyribose 5'-phosphate)-DNA + a 5'-end 5'-phospho-2'-deoxyribonucleoside-DNA + H(+). Involved in base excision repair of DNA damaged by oxidation or by mutagenic agents. Acts as a DNA glycosylase that recognizes and removes damaged bases. Has a preference for oxidized purines, such as 7,8-dihydro-8-oxoguanine (8-oxoG). Has AP (apurinic/apyrimidinic) lyase activity and introduces nicks in the DNA strand. Cleaves the DNA backbone by beta-delta elimination to generate a single-strand break at the site of the removed base with both 3'- and 5'-phosphates. This is Formamidopyrimidine-DNA glycosylase from Prochlorococcus marinus (strain MIT 9215).